We begin with the raw amino-acid sequence, 291 residues long: Cytochrome c-552 (291 aa).

A signal peptide spans 1–23 (MKKTLMASAVGAVIAFGTHGAMA). Heme c contacts are provided by cysteine 68, cysteine 71, histidine 72, cysteine 157, cysteine 161, and histidine 162.

In terms of processing, binds 2 heme c groups per subunit.

The protein resides in the periplasm. Its function is as follows. May play a role in nitrite reduction. Shows peroxidase activity on proteolytic modification. The sequence is that of Cytochrome c-552 (nirB) from Stutzerimonas stutzeri (Pseudomonas stutzeri).